The primary structure comprises 110 residues: Iron-sulfur cluster assembly protein CyaY (110 aa).

It belongs to the frataxin family.

Involved in iron-sulfur (Fe-S) cluster assembly. May act as a regulator of Fe-S biogenesis. This chain is Iron-sulfur cluster assembly protein CyaY, found in Pseudomonas putida (strain ATCC 700007 / DSM 6899 / JCM 31910 / BCRC 17059 / LMG 24140 / F1).